Reading from the N-terminus, the 300-residue chain is Tegument protein VP22 (300 aa).

The segment at 1-148 is disordered; that stretch reads MTSRRSVKSC…PARGRRPAQA (148 aa). 2 stretches are compositionally biased toward basic and acidic residues: residues 10–22 and 50–61; these read CPRE…HEEL and PRGEVRFLHYDE. The Nuclear localization signal motif lies at 163 to 166; that stretch reads GRTK. The tract at residues 174–267 is interaction with gE; it reads KKLHFSTAPP…LVNPDAAQDV (94 aa). Residues 232-244 carry the Nuclear export signal motif; sequence LNELLDLTTIRVT. Residues 269-292 are compositionally biased toward low complexity; it reads ATAAARGRPAGRAAATARAPARSA. The interval 269–300 is disordered; sequence ATAAARGRPAGRAAATARAPARSASRPRRPLE.

The protein belongs to the alphaherpesvirinae VP22 tegument protein family. In terms of assembly, interacts with gE (via C-terminus); this interaction is necessary for the recruitment of VP22 to the Golgi and its packaging into virions. Interacts with gM (via C-terminus). Interacts with VP16; this interaction allows the formation of a tripartite complex composed of VP16, VP22 and UL41/VHS. Interacts with the capsid-binding protein UL16. Interacts with host CGAS. In terms of processing, highly phosphorylated in the host cell. Packaging is selective for underphosphorylated forms.

Its subcellular location is the virion tegument. It localises to the host cytoplasm. The protein resides in the host nucleus. The protein localises to the host Golgi apparatus. Its function is as follows. Tegument protein that plays different roles during the time course of infection. Participates in both the accumulation of viral mRNAs and viral protein translation at late time of infection. Modulates the RNase activity of the virion host shutoff protein UL41 probably to ensure necessary levels of key cellular mRNAs and proteins. Plays a role in microtubule reorganization that occurs after viral infection by stabilizing microtubule network. Plays a role in the inhibition of host innate immune system by targeting the CGAS enzymatic activity which is the principal cytosolic DNA sensor that detects invading viral DNA. Acts by mediating disruption of liquid-like droplets in which CGAS is activated, thereby preventing CGAS activity. The polypeptide is Tegument protein VP22 (Homo sapiens (Human)).